Reading from the N-terminus, the 308-residue chain is Probable dimethyladenosine transferase (308 aa).

The span at 1 to 11 shows a compositional bias: basic residues; it reads MGKTSKVKKTK. The segment at 1-24 is disordered; it reads MGKTSKVKKTKAGSSTGNVQSLPF. A compositionally biased stretch (polar residues) spans 12-24; sequence AGSSTGNVQSLPF. 6 residues coordinate S-adenosyl-L-methionine: His31, Leu33, Gly58, Glu79, Asp107, and Asn122.

The protein belongs to the class I-like SAM-binding methyltransferase superfamily. rRNA adenine N(6)-methyltransferase family. As to quaternary structure, part of the small subunit (SSU) processome, composed of more than 70 proteins and the RNA chaperone small nucleolar RNA (snoRNA) U3.

Its subcellular location is the nucleus. It localises to the nucleolus. It catalyses the reaction adenosine(1779)/adenosine(1780) in 18S rRNA + 4 S-adenosyl-L-methionine = N(6)-dimethyladenosine(1779)/N(6)-dimethyladenosine(1780) in 18S rRNA + 4 S-adenosyl-L-homocysteine + 4 H(+). Specifically dimethylates two adjacent adenosines in the loop of a conserved hairpin near the 3'-end of 18S rRNA in the 40S particle. Involved in the pre-rRNA processing steps leading to small-subunit rRNA production independently of its RNA-modifying catalytic activity. Part of the small subunit (SSU) processome, first precursor of the small eukaryotic ribosomal subunit. During the assembly of the SSU processome in the nucleolus, many ribosome biogenesis factors, an RNA chaperone and ribosomal proteins associate with the nascent pre-rRNA and work in concert to generate RNA folding, modifications, rearrangements and cleavage as well as targeted degradation of pre-ribosomal RNA by the RNA exosome. This chain is Probable dimethyladenosine transferase, found in Caenorhabditis elegans.